We begin with the raw amino-acid sequence, 807 residues long: Glycerol-3-phosphate acyltransferase (807 aa).

The HXXXXD motif signature appears at 308–313; that stretch reads CHRSHM.

It belongs to the GPAT/DAPAT family.

It is found in the cell inner membrane. It carries out the reaction sn-glycerol 3-phosphate + an acyl-CoA = a 1-acyl-sn-glycero-3-phosphate + CoA. It functions in the pathway phospholipid metabolism; CDP-diacylglycerol biosynthesis; CDP-diacylglycerol from sn-glycerol 3-phosphate: step 1/3. This chain is Glycerol-3-phosphate acyltransferase, found in Shewanella sp. (strain MR-7).